Consider the following 1333-residue polypeptide: Partitioning defective 3 homolog (1333 aa).

Ser25 carries the post-translational modification Phosphoserine. Thr91 bears the Phosphothreonine mark. A disordered region spans residues 143–262; sequence SSDPALTGLS…VGHADTGLEN (120 aa). Polar residues-rich tracts occupy residues 150 to 163 and 171 to 187; these read GLST…FSSE and TRWS…TAGS. A phosphoserine mark is found at Ser156 and Ser174. Residues 190-203 show a composition bias toward basic and acidic residues; that stretch reads TCDRKKDENYRSLP. Polar residues predominate over residues 207–224; sequence SSWSNQFQRDNARSSLSA. Positions 271–359 constitute a PDZ 1 domain; the sequence is MVKLVQVPND…ARVIWFHVVP (89 aa). Disordered regions lie at residues 369 to 388 and 397 to 441; these read LSQR…DSHC and NAPQ…APPS. Ser383 carries the phosphoserine modification. 2 PDZ domains span residues 461-546 and 590-677; these read NIQL…LVFR and EVPL…GMIQ. Tyr489 carries the phosphotyrosine modification. Residues Ser692, Ser695, Ser715, Ser728, Ser806, and Ser824 each carry the phosphoserine modification. Interaction with PRKCI and PRKCZ regions lie at residues 712 to 932 and 712 to 936; these read RRIS…YDKP and RRIS…MVDD. Residue Lys831 is modified to N6-acetyllysine. Ser834 carries the phosphoserine modification. N6-acetyllysine is present on Lys848. A phosphoserine mark is found at Ser849 and Ser869. 5 disordered regions span residues 861–884, 928–1011, 1024–1071, 1110–1267, and 1283–1333; these read TVDD…KKSS, SYDK…AKKG, KHRK…ERQA, PQSP…LGGH, and QEQR…PFYS. Residue Lys881 is modified to N6-acetyllysine. The interval 931-1333 is interaction with FRMD4A; the sequence is KPMVDDDDEG…TPEKGRPFYS (403 aa). Over residues 935-949 the composition is skewed to acidic residues; sequence DDDDEGMETLEEDTE. Position 958 is a phosphoserine; by AURKA (Ser958). Phosphoserine occurs at positions 967 and 969. 2 stretches are compositionally biased toward basic and acidic residues: residues 977–1005 and 1026–1039; these read DPEK…EKDK and RKDD…RIKI. The residue at position 1042 (Ser1042) is a Phosphoserine. The span at 1046 to 1071 shows a compositional bias: basic and acidic residues; sequence EEDRVRMKEEQERIQAKTREFRERQA. Positions 1046-1078 form a coiled coil; that stretch reads EEDRVRMKEEQERIQAKTREFRERQARERDYAE. The segment covering 1134–1143 has biased composition (polar residues); sequence PGDSNRSTPS. Residues 1144 to 1171 are compositionally biased toward basic and acidic residues; sequence NHDRIQRLRQEFQQAKQDEDVEDRRRTY. 3 coiled-coil regions span residues 1145 to 1168, 1195 to 1218, and 1274 to 1295; these read HDRI…EDRR, VQVQ…YSSL, and MLET…LKKQ. Residues 1176–1199 are compositionally biased toward low complexity; that stretch reads SWSSSRPASQSGRHSVSVEVQVQR. Positions 1215–1236 are enriched in polar residues; that stretch reads YSSLPRQSRKNASSISQDSWEQ. Residues 1283 to 1292 show a composition bias toward basic and acidic residues; sequence QEQRRKEQQL. Positions 1314–1323 are enriched in polar residues; that stretch reads SQVARLNRLQ. The segment covering 1324 to 1333 has biased composition (basic and acidic residues); that stretch reads TPEKGRPFYS. Lys1327 is subject to N6-acetyllysine.

The protein belongs to the PAR3 family. In terms of assembly, interacts with PRCKI and CDH5. Interacts (via PDZ 3 domain) with PTEN (via C-terminus). Component of a complex whose core is composed of ARHGAP17, AMOT, PALS1, PATJ and PARD3/PAR3. Interacts with LIMK2, AURKA and AURKB. Component of the Par polarity complex, composed of at least phosphorylated PRKCZ, PARD3 and TIAM1. Interacts with ECT2 and FBF1. Interacts (via PDZ 1 domain) with F11R/JAM1, PARD6A and PARD6B. Part of a complex with PARD6A or PARD6B, PRKCI or PRKCZ and CDC42 or RAC1. Directly interacts with TIAM1 and TIAM2. Interacts with SIRT2. Interacts (via coiled-coil domain) with FRMD4A. Found in a complex with PARD3, CYTH1 and FRMD4A. Interacts with SAPCD2. Interacts with PRKCA. Interacts with PRKCZ. Post-translationally, acetylated. Deacetylated by SIRT2, thereby inhibiting Schwann cell peripheral myelination. In terms of processing, phosphorylation at Ser-824 by PRKCZ and PRKCI occurs at the most apical tip of epithelial cell-cell contacts during the initial phase of tight junction formation and may promote dissociation of the complex with PARD6. EGF-induced Tyr-1123 phosphorylation mediates dissociation from LIMK2. Phosphorylation by AURKA at Ser-958 is required for the normal establishment of neuronal polarity. Isoform 4 and isoform 5 are phosphorylated during oocyte maturation. All isoforms are expressed in heart, while expression in brain is mainly limited to isoform 1, and to isoform 3 to a weaker level.

Its subcellular location is the cytoplasm. It localises to the endomembrane system. The protein resides in the cell junction. It is found in the tight junction. The protein localises to the adherens junction. Its subcellular location is the cell cortex. It localises to the cytoskeleton. The protein resides in the cell membrane. Functionally, adapter protein involved in asymmetrical cell division and cell polarization processes. Seems to play a central role in the formation of epithelial tight junctions. Targets the phosphatase PTEN to cell junctions. Association with PARD6B may prevent the interaction of PARD3 with F11R/JAM1, thereby preventing tight junction assembly. The PARD6-PARD3 complex links GTP-bound Rho small GTPases to atypical protein kinase C proteins. Required for establishment of neuronal polarity and normal axon formation in cultured hippocampal neurons. Involved in Schwann cell peripheral myelination. In Mus musculus (Mouse), this protein is Partitioning defective 3 homolog (Pard3).